The chain runs to 249 residues: MFKFRKKSHQEVLDNIPNHIGIIMDGNGRWAKKRLQPRVMGHKAGMDALQKVTIEASQLGVKVLTVYAFSTENWSRPQDEVKFIMNLPVEFFNKYVPELDKNNVRILTIGDNSRLPKETLDALEKAVEQTKHNSGLILNFALNYGGRAEIVSAVQAIAKEVEIGRLRPEAIDEDLIAKHLMTDKLPYLYRDPDLIIRTSGELRLSNFLPWQSAYSEFYFTDVFWPDFDQQGLHQAISDYNKRHRRFGGV.

The active site involves Asp-25. Asp-25 provides a ligand contact to Mg(2+). Substrate-binding positions include 26–29, Trp-30, Arg-38, His-42, and 70–72; these read GNGR and STE. Asn-73 acts as the Proton acceptor in catalysis. Residues Trp-74, Arg-76, Arg-197, and 203-205 each bind substrate; that span reads RLS. Mg(2+) is bound at residue Glu-216.

It belongs to the UPP synthase family. Homodimer. Mg(2+) is required as a cofactor.

Functionally, catalyzes the condensation of isopentenyl diphosphate (IPP) with allylic pyrophosphates generating different type of terpenoids. The protein is Isoprenyl transferase of Streptococcus thermophilus (strain CNRZ 1066).